The chain runs to 207 residues: Guanylate kinase (207 aa).

The Guanylate kinase-like domain maps to 5-184; sequence GNLFIVSAPS…ALADLVAIIR (180 aa). 12-19 contacts ATP; that stretch reads APSGAGKS.

It belongs to the guanylate kinase family.

It localises to the cytoplasm. It catalyses the reaction GMP + ATP = GDP + ADP. Essential for recycling GMP and indirectly, cGMP. The sequence is that of Guanylate kinase from Shewanella violacea (strain JCM 10179 / CIP 106290 / LMG 19151 / DSS12).